A 189-amino-acid polypeptide reads, in one-letter code: Peptidyl-tRNA hydrolase (189 aa).

Tyr-14 provides a ligand contact to tRNA. His-19 acts as the Proton acceptor in catalysis. TRNA contacts are provided by Tyr-64, Asn-66, and Asn-112.

The protein belongs to the PTH family. Monomer.

The protein localises to the cytoplasm. The enzyme catalyses an N-acyl-L-alpha-aminoacyl-tRNA + H2O = an N-acyl-L-amino acid + a tRNA + H(+). Functionally, hydrolyzes ribosome-free peptidyl-tRNAs (with 1 or more amino acids incorporated), which drop off the ribosome during protein synthesis, or as a result of ribosome stalling. Its function is as follows. Catalyzes the release of premature peptidyl moieties from peptidyl-tRNA molecules trapped in stalled 50S ribosomal subunits, and thus maintains levels of free tRNAs and 50S ribosomes. The sequence is that of Peptidyl-tRNA hydrolase from Clostridium botulinum (strain Okra / Type B1).